The primary structure comprises 290 residues: Sporulation-specific protease YabG (290 aa).

Belongs to the peptidase U57 family.

The protein localises to the forespore outer membrane. Functionally, cleaves the spore coat proteins SpoIVA and SafA. May cooperate with tgl to mediate the temperature-dependent cross-linking of coat proteins like GerQ. This Bacillus subtilis (strain 168) protein is Sporulation-specific protease YabG (yabG).